An 885-amino-acid polypeptide reads, in one-letter code: MAPPSTREPRVLSATSATKSDGEMVLPGFPDADSFVKFALGSVVAVTKASGGLPQFGDEYDFYRSFPGFQAFCETQGDRLLQCMSRVMQYHGCRSNIKDRSKVTELEDKFDLLVDANDVILERVGILLDEASGVNKNQQPVLPAGLQVPKTVVSSWNRKAAEYGKKAKSETFRLLHAKNIIRPQLKFREKIDNSNTPFLPKIFIKPNAQKPLPQALSKERRERPQDRPEDLDVPPALADFIHQQRTQQVEQDMFAHPYQYELNHFTPADAVLQKPQPQLYRPIEETPCHFISSLDELVELNEKLLNCQEFAVDLEHHSYRSFLGLTCLMQISTRTEDFIIDTLELRSDMYILNESLTDPAIVKVFHGADSDIEWLQKDFGLYVVNMFDTHQAARLLNLGRHSLDHLLKLYCNVDSNKQYQLADWRIRPLPEEMLSYARDDTHYLLYIYDKMRLEMWERGNGQPVQLQVVWQRSRDICLKKFIKPIFTDESYLELYRKQKKHLNTQQLTAFQLLFAWRDKTARREDESYGYVLPNHMMLKIAEELPKEPQGIIACCNPVPPLVRQQINEMHLLIQQAREMPLLKSEVAAGVKKSGPLPSAERLENVLFGPHDCSHAPPDGYPIIPTSGSVPVQKQASLFPDEKEDNLLGTTCLIATAVITLFNEPSAEDSKKGPLTVAQKKAQNIMESFENPFRMFLPSLGHRAPVSQAAKFDPSTKIYEISNRWKLAQVQVQKDSKEAVKKKAAEQTAAREQAKEACKAAAEQAISVRQQVVLENAAKKRERATSDPRTTEQKQEKKRLKISKKPKDPEPPEKEFTPYDYSQSDFKAFAGNSKSKVSSQFDPNKQTPSGKKCIAAKKIKQSVGNKSMSFPTGKSDRGFRYNWPQR.

A Glycyl lysine isopeptide (Lys-Gly) (interchain with G-Cter in SUMO2) cross-link involves residue Lys19. Residues 289–455 enclose the 3'-5' exonuclease domain; sequence HFISSLDELV…YIYDKMRLEM (167 aa). 4 residues coordinate Mg(2+): Asp313, Glu315, Asp371, and Asp440. Positions 503 to 583 constitute an HRDC domain; sequence NTQQLTAFQL…QQAREMPLLK (81 aa). Residue Lys583 forms a Glycyl lysine isopeptide (Lys-Gly) (interchain with G-Cter in SUMO1); alternate linkage. Residue Lys583 forms a Glycyl lysine isopeptide (Lys-Gly) (interchain with G-Cter in SUMO2); alternate linkage. A Glycyl lysine isopeptide (Lys-Gly) (interchain with G-Cter in SUMO2) cross-link involves residue Lys710. Basic and acidic residues-rich tracts occupy residues 776-794 and 804-816; these read AAKKRERATSDPRTTEQKQ and KPKDPEPPEKEFT. The segment at 776–885 is disordered; it reads AAKKRERATS…RGFRYNWPQR (110 aa). Phosphoserine is present on Ser821. Residues Lys826, Lys833, and Lys859 each participate in a glycyl lysine isopeptide (Lys-Gly) (interchain with G-Cter in SUMO2) cross-link. Residues 831-848 show a composition bias toward polar residues; the sequence is NSKSKVSSQFDPNKQTPS. Residues 861-871 are compositionally biased toward polar residues; that stretch reads SVGNKSMSFPT. Lys873 participates in a covalent cross-link: Glycyl lysine isopeptide (Lys-Gly) (interchain with G-Cter in SUMO2).

This sequence belongs to the exosome component 10/RRP6 family. As to quaternary structure, component of the RNA exosome complex. The catalytically inactive RNA exosome core complex (Exo-9) associates with the catalytic subunit EXOSC10/RRP6 (via its N-terminus). Exo-9 may associate with DIS3 to form the nucleolar exosome complex, or DIS3L to form the cytoplasmic exosome complex. The RNA exosome complex interacts with cofactors C1D/RRP47, MPHOSPH6/MPP6 and MTREX/MTR4. Interacts with MTREX; the interaction with MTREX mediates the association of MTREX with nuclear RNA exosomes. Part of the small subunit (SSU) processome, composed of more than 70 proteins and the RNA chaperone small nucleolar RNA (snoRNA) U3. Interacts with ALYREF/THOC4. Interacts with DHX36; this interaction occurs in a RNase-insensitive manner. Interacts with NRDE2. Interacts (via C-terminus) with USP36 (via C-terminus); the interaction is facilitated by the association with RNA and promotes sumoylation of EXOSC10. Mg(2+) is required as a cofactor. Sumoylated by USP36; sumoylation does not significantly affect EXOSC10 nucleolar localization and association with core exosome and USP36, but regulates the nucleolar RNA exosome activity in rRNA processing by promoting binding of EXOSC10 to pre-rRNAs. Effects of sumoylation on EXOSC10 levels vary between different studies. Sumoylation of EXOSC10 is required for the modulation of EXOSC10 effects on cellular protein translation and cell proliferation. Sumoylation is promoted by mild hypothermia.

It localises to the cytoplasm. The protein localises to the nucleus. It is found in the nucleolus. The protein resides in the nucleoplasm. Arginine-rich dipeptide repeat proteins expressed from C9orf72-derived repeat RNA interact with EXOSC10 and inhibit its ability to promote degradation of this RNA. Functionally, catalytic component of the RNA exosome complex which has 3'-&gt;5' exoribonuclease activity and participates in a multitude of cellular RNA processing and degradation events. In the nucleus, the RNA exosome complex is involved in proper maturation of stable RNA species such as rRNA, snRNA and snoRNA, in the elimination of RNA processing by-products and non-coding 'pervasive' transcripts, such as antisense RNA species and promoter-upstream transcripts (PROMPTs), and of mRNAs with processing defects, thereby limiting or excluding their export to the cytoplasm. Part of the small subunit (SSU) processome, first precursor of the small eukaryotic ribosomal subunit. During the assembly of the SSU processome in the nucleolus, many ribosome biogenesis factors, an RNA chaperone and ribosomal proteins associate with the nascent pre-rRNA and work in concert to generate RNA folding, modifications, rearrangements and cleavage as well as targeted degradation of pre-ribosomal RNA by the RNA exosome. The RNA exosome may be involved in Ig class switch recombination (CSR) and/or Ig variable region somatic hypermutation (SHM) by targeting AICDA deamination activity to transcribed dsDNA substrates. In the cytoplasm, the RNA exosome complex is involved in general mRNA turnover and specifically degrades inherently unstable mRNAs containing AU-rich elements (AREs) within their 3' untranslated regions, and in RNA surveillance pathways, preventing translation of aberrant mRNAs. It seems to be involved in degradation of histone mRNA. EXOSC10 is required for nucleolar localization of C1D and probably mediates the association of MTREX, C1D and MPHOSPH6 with the RNA exosome involved in the maturation of 5.8S rRNA. Plays a role in the recruitment of replication protein A complex (RPA) and RAD51 to DNA double-strand breaks caused by irradiation, contributing to DNA repair by homologous recombination. Regulates levels of damage-induced RNAs in order to prevent DNA-RNA hybrid formation at DNA double-strand breaks and limit DNA end resection after damage. Plays a role in oocyte development, maturation and survival. Required for normal testis development and mitotic division of spermatogonia. Plays a role in proper embryo development. Required for global protein translation. Required for cell proliferation. Regulates metabolism of C9orf72-derived repeat RNA that can be translated into toxic dipeptide repeat proteins. The chain is Exosome complex component 10 from Homo sapiens (Human).